The chain runs to 339 residues: UDP-glucose 4-epimerase (339 aa).

NAD(+)-binding positions include glycine 10–isoleucine 12, aspartate 31–asparagine 35, aspartate 58–leucine 59, phenylalanine 80, and lysine 84. A substrate-binding site is contributed by serine 124–threonine 126. The Proton acceptor role is filled by tyrosine 148. NAD(+) contacts are provided by lysine 152 and tyrosine 176. Substrate is bound by residues tyrosine 176 to asparagine 178, asparagine 197 to leucine 199, arginine 230, and arginine 291 to aspartate 294.

Belongs to the NAD(P)-dependent epimerase/dehydratase family. Requires NAD(+) as cofactor.

The catalysed reaction is UDP-alpha-D-glucose = UDP-alpha-D-galactose. The enzyme catalyses UDP-N-acetyl-alpha-D-glucosamine = UDP-N-acetyl-alpha-D-galactosamine. Its pathway is cell wall biogenesis; teichoic acid biosynthesis. In terms of biological role, catalyzes two distinct but analogous reactions: the reversible epimerization of UDP-glucose to UDP-galactose and the reversible epimerization of UDP-N-acetylglucosamine to UDP-N-acetylgalactosamine. The enzyme is more efficient in catalyzing the interconversion between unacetylated than between corresponding N-acetylated substrates. Essential for growth in media containing either glucose or galactose. May protect the cell from the toxic effects of galactose and glucose or derivatives of both sugars. Involved in the biosynthesis of teichoic acids via the formation of UDP-N-acetylgalactosamine. Influences cell division. The sequence is that of UDP-glucose 4-epimerase from Bacillus subtilis (strain 168).